The sequence spans 418 residues: Voltage-gated ClC-type chloride channel ClcB (418 aa).

The Cytoplasmic segment spans residues 1–4 (MFRR). A helical membrane pass occupies residues 5-25 (LLIATIVGILAAFAVAGFRHA). Topologically, residues 26–53 (MLLLEWLFLNNDSGSLVNAATNLSPWRR) are periplasmic. The helical transmembrane segment at 54–74 (LLTPALGGLAAGLLLMGWQKF) threads the bilayer. At 75 to 145 (TQQRPHAPTD…QRFTPRQEWK (71 aa)) the chain is on the cytoplasmic side. Residues 146 to 166 (LWIACGAAAGMAAAYRAPLAG) traverse the membrane as a helical segment. The Periplasmic segment spans residues 167-177 (SLFIAEVLFGT). Residues 178 to 200 (MMLASLGPVIISAVVALLISNLI) traverse the membrane as a helical segment. Over 201–221 (NHSDALLYSVQLSVTVQARDY) the chain is Cytoplasmic. Residues 222–242 (ALIISTGVLAGLCGPLLLTLM) form a helical membrane-spanning segment. Residues 243-257 (NACHRGFVSLKLAPP) lie on the Periplasmic side of the membrane. A helical transmembrane segment spans residues 258–278 (WQLALGGLIVGLLSLFTPAVW). Topologically, residues 279–290 (GNGYSTVQSFLT) are cytoplasmic. Residues 291–311 (APPLLMIIAGIFLCKLCAVLA) form a helical membrane-spanning segment. Residues 312–315 (SSGS) are Periplasmic-facing. A helical membrane pass occupies residues 316–336 (GAPGGVFTPTLFIGLAIGMLY). Topologically, residues 337–351 (GRSLGLWLPDGEEIT) are cytoplasmic. A helical membrane pass occupies residues 352-372 (LLLGLTGMATLLAATTHAPIM). At 373 to 379 (STLMICE) the chain is on the periplasmic side. Residues 380-400 (MTGEYQLLPGLLIACVIASVI) form a helical membrane-spanning segment. Residues 401–418 (SRTLHRDSIYRQHTAKHS) are Cytoplasmic-facing.

Belongs to the chloride channel (TC 2.A.49) family. ClcB subfamily.

It localises to the cell inner membrane. Its function is as follows. Probably acts as an electrical shunt for an outwardly-directed proton pump that is linked to amino acid decarboxylation, as part of the extreme acid resistance (XAR) response. This chain is Voltage-gated ClC-type chloride channel ClcB (clcB), found in Escherichia coli O6:H1 (strain CFT073 / ATCC 700928 / UPEC).